The following is a 50-amino-acid chain: Basic phospholipase A2 Bmaj-9 (50 aa).

Ca(2+)-binding residues include Tyr-27, Gly-29, and Gly-31. Residues Cys-28 and Cys-45 are joined by a disulfide bond. Residue His-48 is part of the active site. Asp-49 contributes to the Ca(2+) binding site.

Belongs to the phospholipase A2 family. Group II subfamily. D49 sub-subfamily. Ca(2+) serves as cofactor. Expressed by the venom gland.

Its subcellular location is the secreted. The catalysed reaction is a 1,2-diacyl-sn-glycero-3-phosphocholine + H2O = a 1-acyl-sn-glycero-3-phosphocholine + a fatty acid + H(+). Snake venom phospholipase A2 (PLA2) that causes irreversible neuromuscular blockade in chick biventer cervicis muscle preparations. The neuromuscular blockade is mediated by inhibitory action at the presynaptic motor nerve endings. PLA2 catalyzes the calcium-dependent hydrolysis of the 2-acyl groups in 3-sn-phosphoglycerides. This is Basic phospholipase A2 Bmaj-9 from Bothrops marajoensis (Marajo lancehead).